The primary structure comprises 101 residues: Small ribosomal subunit protein uS14 (101 aa).

It belongs to the universal ribosomal protein uS14 family. In terms of assembly, part of the 30S ribosomal subunit. Contacts proteins S3 and S10.

Functionally, binds 16S rRNA, required for the assembly of 30S particles and may also be responsible for determining the conformation of the 16S rRNA at the A site. In Xylella fastidiosa (strain 9a5c), this protein is Small ribosomal subunit protein uS14.